The sequence spans 303 residues: Signal recognition particle receptor FtsY (303 aa).

Residues 108-115 (GVNGAGKT), 190-194 (DTAGR), and 254-257 (TKLD) contribute to the GTP site.

The protein belongs to the GTP-binding SRP family. FtsY subfamily. In terms of assembly, part of the signal recognition particle protein translocation system, which is composed of SRP and FtsY. SRP is a ribonucleoprotein composed of Ffh and a 4.5S RNA molecule.

Its subcellular location is the cell inner membrane. The protein resides in the cytoplasm. It carries out the reaction GTP + H2O = GDP + phosphate + H(+). Functionally, involved in targeting and insertion of nascent membrane proteins into the cytoplasmic membrane. Acts as a receptor for the complex formed by the signal recognition particle (SRP) and the ribosome-nascent chain (RNC). Interaction with SRP-RNC leads to the transfer of the RNC complex to the Sec translocase for insertion into the membrane, the hydrolysis of GTP by both Ffh and FtsY, and the dissociation of the SRP-FtsY complex into the individual components. In Rickettsia bellii (strain RML369-C), this protein is Signal recognition particle receptor FtsY.